We begin with the raw amino-acid sequence, 277 residues long: Shikimate dehydrogenase (NADP(+)) (277 aa).

Residues 15–17 (SLS) and threonine 62 each bind shikimate. The active-site Proton acceptor is lysine 66. Shikimate is bound by residues asparagine 87 and aspartate 102. NADP(+) is bound by residues 127–131 (GAGGA), 151–156 (NRTVDK), and isoleucine 219. Residue tyrosine 221 participates in shikimate binding. Glycine 242 contributes to the NADP(+) binding site.

This sequence belongs to the shikimate dehydrogenase family. In terms of assembly, homodimer.

The enzyme catalyses shikimate + NADP(+) = 3-dehydroshikimate + NADPH + H(+). The protein operates within metabolic intermediate biosynthesis; chorismate biosynthesis; chorismate from D-erythrose 4-phosphate and phosphoenolpyruvate: step 4/7. Involved in the biosynthesis of the chorismate, which leads to the biosynthesis of aromatic amino acids. Catalyzes the reversible NADPH linked reduction of 3-dehydroshikimate (DHSA) to yield shikimate (SA). The polypeptide is Shikimate dehydrogenase (NADP(+)) (Bacillus cereus (strain G9842)).